We begin with the raw amino-acid sequence, 819 residues long: Regulator of G-protein signaling rgs-7 (819 aa).

Residues 1–11 (MSDEDADEYDD) show a composition bias toward acidic residues. Disordered regions lie at residues 1-51 (MSDE…EMLW), 112-135 (GDDSSFRSRDRFVPPRRPRMGYGS), and 149-259 (SSTY…HNNE). A compositionally biased stretch (polar residues) spans 32 to 44 (YQDTTESTGPSEA). The span at 112-124 (GDDSSFRSRDRFV) shows a compositional bias: basic and acidic residues. A compositionally biased stretch (low complexity) spans 149–166 (SSTYSSSSEAHRLSSLRA). Over residues 173–185 (QLTSTTTSFQPLS) the composition is skewed to polar residues. Over residues 213–223 (RMYRKNPKYRR) the composition is skewed to basic residues. Over residues 234 to 259 (SRLEESTSQESERAVTPESWMEHNNE) the composition is skewed to basic and acidic residues. One can recognise a C2 domain in the interval 290–429 (KHKDIRGIIF…KASQVVGDPF (140 aa)). Disordered regions lie at residues 515 to 594 (YRST…DDNG) and 617 to 640 (FTFSPKHSSSKTNLRQLNGREEDK). 3 stretches are compositionally biased toward polar residues: residues 517-533 (STGSSDMRGRSTNNLLD), 559-568 (PSITTTTSEN), and 617-632 (FTFSPKHSSSKTNLRQ). Residues 682-800 (SFESLLNNKF…LRDRLFLDLL (119 aa)) enclose the RGS domain.

In terms of assembly, interacts with egl-30.

Its function is as follows. Inhibits signal transduction by increasing the GTPase activity of G protein alpha subunit egl-30 (G-alpha(q)), thereby driving it into its inactive GDP-bound form. May organize egl-30 into a stable multiprotein signaling complex, and thereby persistently inhibit egl-30 when triggered by calcium or phospholipids. The protein is Regulator of G-protein signaling rgs-7 (rgs-7) of Caenorhabditis elegans.